The following is a 165-amino-acid chain: Nascent polypeptide-associated complex subunit alpha (165 aa).

One can recognise an NAC-A/B domain in the interval Asn14–Leu78. In terms of domain architecture, UBA spans Leu126–Lys165.

This sequence belongs to the NAC-alpha family. Part of the nascent polypeptide-associated complex (NAC), consisting of EGD2 and EGD1. NAC associates with ribosomes via EGD1.

The protein resides in the cytoplasm. It localises to the nucleus. Functionally, component of the nascent polypeptide-associated complex (NAC), a dynamic component of the ribosomal exit tunnel, protecting the emerging polypeptides from interaction with other cytoplasmic proteins to ensure appropriate nascent protein targeting. The NAC complex also promotes mitochondrial protein import by enhancing productive ribosome interactions with the outer mitochondrial membrane and blocks the inappropriate interaction of ribosomes translating non-secretory nascent polypeptides with translocation sites in the membrane of the endoplasmic reticulum. EGD2 may also be involved in transcription regulation. The sequence is that of Nascent polypeptide-associated complex subunit alpha (EGD2) from Candida glabrata (strain ATCC 2001 / BCRC 20586 / JCM 3761 / NBRC 0622 / NRRL Y-65 / CBS 138) (Yeast).